Consider the following 312-residue polypeptide: DNA-directed RNA polymerase subunit alpha (312 aa).

The interval 1–226 (MIEFEKPNIT…EHLDLFTDLT (226 aa)) is alpha N-terminal domain (alpha-NTD). The alpha C-terminal domain (alpha-CTD) stretch occupies residues 244 to 312 (DHVLERTIEE…DLGLGLKNDK (69 aa)).

It belongs to the RNA polymerase alpha chain family. Homodimer. The RNAP catalytic core consists of 2 alpha, 1 beta, 1 beta' and 1 omega subunit. When a sigma factor is associated with the core the holoenzyme is formed, which can initiate transcription.

It catalyses the reaction RNA(n) + a ribonucleoside 5'-triphosphate = RNA(n+1) + diphosphate. In terms of biological role, DNA-dependent RNA polymerase catalyzes the transcription of DNA into RNA using the four ribonucleoside triphosphates as substrates. The chain is DNA-directed RNA polymerase subunit alpha from Streptococcus gordonii (strain Challis / ATCC 35105 / BCRC 15272 / CH1 / DL1 / V288).